Consider the following 299-residue polypeptide: Ethylmalonyl-CoA decarboxylase (299 aa).

Belongs to the enoyl-CoA hydratase/isomerase family.

Its subcellular location is the cytoplasm. It is found in the cytosol. It carries out the reaction (2S)-ethylmalonyl-CoA + H(+) = butanoyl-CoA + CO2. The catalysed reaction is (S)-methylmalonyl-CoA + H(+) = propanoyl-CoA + CO2. The enzyme catalyses (2R)-ethylmalonyl-CoA + H(+) = butanoyl-CoA + CO2. Decarboxylates ethylmalonyl-CoA, a potentially toxic metabolite, to form butyryl-CoA, suggesting it might be involved in metabolite proofreading. Acts preferentially on (S)-ethylmalonyl-CoA but also has some activity on the (R)-isomer. Also has methylmalonyl-CoA decarboxylase activity at lower level. The polypeptide is Ethylmalonyl-CoA decarboxylase (echdc1) (Xenopus tropicalis (Western clawed frog)).